The chain runs to 772 residues: uncharacterized protein (772 aa).

2 consecutive transmembrane segments (helical) span residues 16-36 (LITF…LFSY) and 301-321 (IGWI…LFSW). Residues 670 to 768 (DNIIHIIHHE…GITPGNYRQQ (99 aa)) enclose the HTH araC/xylS-type domain. 2 DNA-binding regions (H-T-H motif) span residues 687–708 (DEIA…KKEM) and 735–758 (VKDI…KKLE).

The protein localises to the cell membrane. This is an uncharacterized protein from Bacillus subtilis (strain 168).